The following is a 274-amino-acid chain: MQFSKMHGLGNDFMVVDAVTQNVFFSPELIRRLADRHLGVGFDQLLVVEPPYDPELDFHYRIFNADGSEVAQCGNGARCFARFVRLKGLTNKRDIRVSTANGRMVLTVTDDDLVRVNMGEPNFEPSAVPFRANKAEKTYIMRAAEQTILCGVVSMGNPHCVIQVDDVDTAAVETLGPVLESHERFPERANIGFMQVVKREHIRLRVYERGAGETQACGSGACAAVAVGIQQGLLDEEVRVELPGGRLDIAWKGPGHPLYMTGPAVHVYDGFIHL.

Substrate is bound by residues asparagine 11, glutamine 44, and asparagine 64. Cysteine 73 serves as the catalytic Proton donor. Residues 74-75 (GN), asparagine 157, asparagine 190, and 208-209 (ER) contribute to the substrate site. The active-site Proton acceptor is the cysteine 217. 218–219 (GS) is a binding site for substrate.

Belongs to the diaminopimelate epimerase family. Homodimer.

The protein resides in the cytoplasm. It catalyses the reaction (2S,6S)-2,6-diaminopimelate = meso-2,6-diaminopimelate. The protein operates within amino-acid biosynthesis; L-lysine biosynthesis via DAP pathway; DL-2,6-diaminopimelate from LL-2,6-diaminopimelate: step 1/1. Functionally, catalyzes the stereoinversion of LL-2,6-diaminopimelate (L,L-DAP) to meso-diaminopimelate (meso-DAP), a precursor of L-lysine and an essential component of the bacterial peptidoglycan. The chain is Diaminopimelate epimerase from Shigella flexneri serotype 5b (strain 8401).